The chain runs to 124 residues: Small ribosomal subunit protein bS6 (124 aa).

The protein belongs to the bacterial ribosomal protein bS6 family.

Functionally, binds together with bS18 to 16S ribosomal RNA. The polypeptide is Small ribosomal subunit protein bS6 (Chromobacterium violaceum (strain ATCC 12472 / DSM 30191 / JCM 1249 / CCUG 213 / NBRC 12614 / NCIMB 9131 / NCTC 9757 / MK)).